Here is a 92-residue protein sequence, read N- to C-terminus: Small ribosomal subunit protein uS19c (92 aa).

This sequence belongs to the universal ribosomal protein uS19 family.

Its subcellular location is the plastid. Its function is as follows. Protein S19 forms a complex with S13 that binds strongly to the 16S ribosomal RNA. This is Small ribosomal subunit protein uS19c from Aneura mirabilis (Parasitic liverwort).